Consider the following 485-residue polypeptide: Glutamyl-tRNA(Gln) amidotransferase subunit A (485 aa).

Active-site charge relay system residues include K79 and S154. S178 serves as the catalytic Acyl-ester intermediate.

Belongs to the amidase family. GatA subfamily. In terms of assembly, heterotrimer of A, B and C subunits.

The catalysed reaction is L-glutamyl-tRNA(Gln) + L-glutamine + ATP + H2O = L-glutaminyl-tRNA(Gln) + L-glutamate + ADP + phosphate + H(+). Its function is as follows. Allows the formation of correctly charged Gln-tRNA(Gln) through the transamidation of misacylated Glu-tRNA(Gln) in organisms which lack glutaminyl-tRNA synthetase. The reaction takes place in the presence of glutamine and ATP through an activated gamma-phospho-Glu-tRNA(Gln). This Staphylococcus epidermidis (strain ATCC 35984 / DSM 28319 / BCRC 17069 / CCUG 31568 / BM 3577 / RP62A) protein is Glutamyl-tRNA(Gln) amidotransferase subunit A.